Here is a 144-residue protein sequence, read N- to C-terminus: Universal stress protein F (144 aa).

Belongs to the universal stress protein A family. In terms of assembly, homodimer.

This chain is Universal stress protein F (uspF), found in Salmonella typhi.